Consider the following 304-residue polypeptide: MKRAHPEYSSSESELDETIEVEKESADENGNLSSALGSMSPTTSSQILARKRRRGIIEKRRRDRINNSLSELRRLVPSAFEKQGSAKLEKAEILQMTVDHLKMLHTAGGKGYFDAHALAMDYRSLGFRECLAEVARYLSIIEGLDASDPLRVRLVSHLNNYASQREAASGAHAGLGHIPWGSAFGHHPHVAHPLLLSQSTHGNTGTSASPTESHHQGRLATAHPEASALRAPPSGGLGPVLPVVTSASKLSPPLLSSVASLSAFPFSFGSFHLLSPNALSPSAPTQAANLGKPYRPWGTEIGAF.

The segment at 1 to 52 (MKRAHPEYSSSESELDETIEVEKESADENGNLSSALGSMSPTTSSQILARKR) is disordered. Polar residues predominate over residues 28–47 (ENGNLSSALGSMSPTTSSQI). Residues 48–117 (LARKRRRGII…GGKGYFDAHA (70 aa)) are transcriptional repression and interaction with NCOR1 and SIN3A. A bHLH domain is found at 49-104 (ARKRRRGIIEKRRRDRINNSLSELRRLVPSAFEKQGSAKLEKAEILQMTVDHLKML). Residues 122-158 (YRSLGFRECLAEVARYLSIIEGLDASDPLRVRLVSHL) enclose the Orange domain. Residues 197 to 211 (SQSTHGNTGTSASPT) show a composition bias toward polar residues. Positions 197–234 (SQSTHGNTGTSASPTESHHQGRLATAHPEASALRAPPS) are disordered. The short motif at 294–297 (YRPW) is the YRPW motif element.

The protein belongs to the HEY family. Self-associates. Interacts with HES1 and HEYL. Interacts with HDAC1, NCOR1 and SIN3A. Interacts with GATA4 and GATA6. Interacts with CCDC89/BOIP.

It localises to the nucleus. Its function is as follows. Transcriptional repressor which binds preferentially to the canonical E box sequence 5'-CACGTG-3'. Downstream effector of Notch signaling required for cardiovascular development. Specifically required for the Notch-induced endocardial epithelial to mesenchymal transition, which is itself criticial for cardiac valve and septum development. May be required in conjunction with HEY2 to specify arterial cell fate or identity. Promotes maintenance of neuronal precursor cells and glial versus neuronal fate specification. Represses transcription by the cardiac transcriptional activators GATA4 and GATA6 and by the neuronal bHLH factors ASCL1/MASH1 and NEUROD4/MATH3. This chain is Hairy/enhancer-of-split related with YRPW motif protein 1 (HEY1), found in Bos taurus (Bovine).